The primary structure comprises 94 residues: Large ribosomal subunit protein uL23 (94 aa).

It belongs to the universal ribosomal protein uL23 family. In terms of assembly, part of the 50S ribosomal subunit. Contacts protein L29, and trigger factor when it is bound to the ribosome.

One of the early assembly proteins it binds 23S rRNA. One of the proteins that surrounds the polypeptide exit tunnel on the outside of the ribosome. Forms the main docking site for trigger factor binding to the ribosome. The protein is Large ribosomal subunit protein uL23 of Exiguobacterium sibiricum (strain DSM 17290 / CCUG 55495 / CIP 109462 / JCM 13490 / 255-15).